The following is a 58-amino-acid chain: LLQVPLEKGQSAREYLQEQGLWEQYRLKYPYNPMAKFDPSFAVAGEPMTNDADLAYYG.

The propeptide at 1–41 is activation peptide; sequence LLQVPLEKGQSAREYLQEQGLWEQYRLKYPYNPMAKFDPSF.

The protein belongs to the peptidase A1 family.

This is Pepsin-1 from Thunnus orientalis (North Pacific bluefin tuna).